The chain runs to 479 residues: NADH-quinone oxidoreductase subunit N 2 (479 aa).

A run of 14 helical transmembrane segments spans residues Phe4–Thr24, Gly43–Tyr63, Ala67–Ser87, Pro99–Ile119, Val121–Met141, Ile159–Leu179, Ala201–Phe221, Leu239–Ala259, Ala267–Val287, Leu294–Asp314, Phe318–Val338, Leu364–Phe384, Ala401–Val421, and Ala444–Ile464.

The protein belongs to the complex I subunit 2 family. NDH-1 is composed of 14 different subunits. Subunits NuoA, H, J, K, L, M, N constitute the membrane sector of the complex.

The protein resides in the cell inner membrane. The enzyme catalyses a quinone + NADH + 5 H(+)(in) = a quinol + NAD(+) + 4 H(+)(out). Its function is as follows. NDH-1 shuttles electrons from NADH, via FMN and iron-sulfur (Fe-S) centers, to quinones in the respiratory chain. The immediate electron acceptor for the enzyme in this species is believed to be ubiquinone. Couples the redox reaction to proton translocation (for every two electrons transferred, four hydrogen ions are translocated across the cytoplasmic membrane), and thus conserves the redox energy in a proton gradient. This Opitutus terrae (strain DSM 11246 / JCM 15787 / PB90-1) protein is NADH-quinone oxidoreductase subunit N 2.